The following is a 319-amino-acid chain: Cytochrome c biogenesis protein CcsA (319 aa).

Helical transmembrane passes span 9–29 (ILTH…LISL), 48–68 (TFFC…HFPL), 71–91 (LYES…VPYF), 98–118 (LSTI…SGLL), 143–163 (MILG…LLVI), 225–245 (IISL…VWAN), 258–275 (ETWA…LHTR), and 286–306 (AIVA…VNLL).

The protein belongs to the CcmF/CycK/Ccl1/NrfE/CcsA family. As to quaternary structure, may interact with Ccs1.

The protein resides in the plastid. Its subcellular location is the chloroplast thylakoid membrane. Functionally, required during biogenesis of c-type cytochromes (cytochrome c6 and cytochrome f) at the step of heme attachment. The protein is Cytochrome c biogenesis protein CcsA of Eucalyptus globulus subsp. globulus (Tasmanian blue gum).